The sequence spans 986 residues: Anoctamin-1 (986 aa).

Topologically, residues 1 to 333 (MRVNEKYSTL…FGEKIGLYFA (333 aa)) are cytoplasmic. Residues 79-121 (LVRRVQHSDTPSGARSVKQDHPLPGKGASLDAGSGEPPMDYHE) are disordered. Phosphoserine is present on residues serine 107 and serine 196. A helical membrane pass occupies residues 334–354 (WLGVYTQMLIPASIVGIIVFL). The Extracellular portion of the chain corresponds to 355–406 (YGCATMDENIPSMEMCDQRHNITMCPLCDKTCSYWKMSSACATARASHLFDN). 4 cysteine pairs are disulfide-bonded: cysteine 370–cysteine 395, cysteine 379–cysteine 862, cysteine 382–cysteine 386, and cysteine 651–cysteine 656. Residues 407–427 (PATVFFSVFMALWAATFMEHW) traverse the membrane as a helical segment. Glutamate 425 contacts Ca(2+). Residues 428-519 (KRKQMRLNYR…RDRFPAYLTN (92 aa)) are Cytoplasmic-facing. The chain crosses the membrane as a helical span at residues 520-540 (LVSIIFMIAVTFAIVLGVIIY). At 541–568 (RISMAAALAMNSSPSVRSNIRVTVTATA) the chain is on the extracellular side. A helical transmembrane segment spans residues 569 to 589 (VIINLVVIILLDEVYGCIARW). The Cytoplasmic segment spans residues 590–607 (LTKIEVPKTEKSFEERLI). A helical transmembrane segment spans residues 608–628 (FKAFLLKFVNSYTPIFYVAFF). Topologically, residues 629–657 (KGRFVGRPGDYVYIFRSFRMEECAPGGCL) are extracellular. Residues 658-678 (MELCIQLSIIMLGKQLIQNNL) traverse the membrane as a helical segment. Asparagine 677, glutamate 680, glutamate 728, glutamate 731, glutamate 760, and aspartate 764 together coordinate Ca(2+). At 679–725 (FEIGIPKMKKLIRYLKLKQQSPPDHEECVKRKQRYEVDYNLEPFAGL) the chain is on the cytoplasmic side. A run of 2 helical transmembrane segments spans residues 726-746 (TPEY…VASF) and 747-767 (PLAP…DAKK). Residues 768-784 (FVTELRRPVAVRAKDIG) are Cytoplasmic-facing. A helical membrane pass occupies residues 785-805 (IWYNILRGIGKLAVIINAFVI). Over 806 to 892 (SFTSDFIPRL…FWAVLAARLA (87 aa)) the chain is Extracellular. Residue asparagine 832 is glycosylated (N-linked (GlcNAc...) asparagine). A helical transmembrane segment spans residues 893–913 (FVIVFQNLVMFMSDFVDWVIP). Residues aspartate 909 and aspartate 914 each contribute to the Ca(2+) site. Residues 914–986 (DIPKDISQQI…PSHAYHGGVL (73 aa)) are Cytoplasmic-facing. The span at 951 to 960 (KERQKDEPPC) shows a compositional bias: basic and acidic residues. A disordered region spans residues 951 to 986 (KERQKDEPPCNHHNTKACPDSLGSPAPSHAYHGGVL).

This sequence belongs to the anoctamin family. As to quaternary structure, homodimer. Interacts with CFTR. Interacts with TRPV4. In terms of tissue distribution, expressed in nasal epithelial cells (at protein level). In the kidney, expressed in the collecting duct (at protein level). Broadly expressed with higher levels in liver, skeletal muscle and gastrointestinal muscles. Expressed in eccrine sweat glands.

It localises to the apical cell membrane. The protein localises to the presynapse. It catalyses the reaction chloride(in) = chloride(out). ATP and calmodulin are essential for its activation. Channel activity is inhibited by CFTR protein and by chloride inhibitors such as niflumic acid (NFA) and 4,4'-diisothiocyanatostilbene-2,2'-disulfonic acid (DIDS). Activated by heat with activation seen at temperatures above 44 degrees Celsius. Activated by BDNF in radial glial cells. Functionally, calcium-activated chloride channel (CaCC). Plays a role in transepithelial anion transport and smooth muscle contraction. Required for the normal functioning of the interstitial cells of Cajal (ICCs) which generate electrical pacemaker activity in gastrointestinal smooth muscles. Acts as a major contributor to basal and stimulated chloride conductance in airway epithelial cells and plays an important role in tracheal cartilage development. Required for CFTR activation by enhancing endoplasmic reticulum Ca(2+) store release and is also required for CFTR membrane expression. Required for basal and ATP-dependent mucus secretion in airways and intestine, probably by controlling exocytosis of mucus-filled granules by providing Ca(2+) to an apical signaling compartment. Contributes to airway mucus expression induced by interleukins IL3 and IL8 and by the asthma-associated protein CLCA1 and is required for expression of mucin MUC5AC. However, was shown in another study not to be required for MUC5AC expression. Plays a role in the propagation of Ca(2+) waves in Kolliker's organ in the cochlea and contributes to the refinement of auditory brainstem circuitries prior to hearing onset. In vomeronasal sensory neurons, modulates spontaneous firing patterns in the absence of stimuli as well as the firing pattern of pheromone-evoked activity. Responsible for calcium-activated chloride channel activity in type I taste cells of the vallate papillae. Acts as a heat sensor in nociceptive neurons. In dorsal root ganglion neurons, plays a role in mediating non-histaminergic Mas-related G-protein coupled receptor (MRGPR)-dependent itching, acting as a downstream effector of MRGPRs. In the developing brain, required for the Ca(2+)-dependent process extension of radial glial cells. Calcium-activated chloride channel (CaCC). Contributes to calcium-activated chloride secretion in human sweat gland epithelial cells. Shows increased basal chloride permeability and decreased Ca(2+)-induced chloride permeability. In terms of biological role, calcium-activated chloride channel (CaCC). Shows increased sensitivity to intracellular Ca(2+). The sequence is that of Anoctamin-1 (ANO1) from Homo sapiens (Human).